The sequence spans 116 residues: Probable non-functional immunoglobulin kappa variable 3-7 (116 aa).

A signal peptide spans 1-21 (MEAPAQLLFLLLLWLPDTTRE). Residues 21–43 (EIVMTQSPPTLSLSPGERVTLSC) form a framework-1 region. The Ig-like domain occupies 22-116 (IVMTQSPPTL…YYCQQDYNLP (95 aa)). Residues C43 and C109 are joined by a disulfide bond. The segment at 44–55 (RASQSVSSSYLT) is complementarity-determining-1. The interval 56–70 (WYQQKPGQAPRLLIY) is framework-2. Positions 71–77 (GASTRAT) are complementarity-determining-2. Positions 78 to 109 (SIPARFSGSGSGTDFTLTISSLQPEDFAVYYC) are framework-3. The interval 110–116 (QQDYNLP) is complementarity-determining-3.

In terms of assembly, immunoglobulins are composed of two identical heavy chains and two identical light chains; disulfide-linked.

The protein localises to the secreted. Its subcellular location is the cell membrane. Functionally, probable non-functional open reading frame (ORF) of V region of the variable domain of immunoglobulin light chains. Non-functional ORF generally cannot participate in the synthesis of a productive immunoglobulin chain due to altered V-(D)-J or switch recombination and/or splicing site (at mRNA level) and/or conserved amino acid change (protein level). Immunoglobulins, also known as antibodies, are membrane-bound or secreted glycoproteins produced by B lymphocytes. In the recognition phase of humoral immunity, the membrane-bound immunoglobulins serve as receptors which, upon binding of a specific antigen, trigger the clonal expansion and differentiation of B lymphocytes into immunoglobulins-secreting plasma cells. Secreted immunoglobulins mediate the effector phase of humoral immunity, which results in the elimination of bound antigens. The antigen binding site is formed by the variable domain of one heavy chain, together with that of its associated light chain. Thus, each immunoglobulin has two antigen binding sites with remarkable affinity for a particular antigen. The variable domains are assembled by a process called V-(D)-J rearrangement and can then be subjected to somatic hypermutations which, after exposure to antigen and selection, allow affinity maturation for a particular antigen. The protein is Probable non-functional immunoglobulin kappa variable 3-7 of Homo sapiens (Human).